The following is a 487-amino-acid chain: Serine/threonine-protein kinase BSK8 (487 aa).

Gly2 carries the N-myristoyl glycine lipid modification. A Phosphoserine modification is found at Ser20. The region spanning 59–325 (ENIVSEHGER…DLEIASHQLL (267 aa)) is the Protein kinase domain. ATP contacts are provided by residues 65 to 73 (HGERAPNVV), Asn71, Lys87, and 133 to 135 (EFM). The Proton acceptor role is filled by Asp181. ATP contacts are provided by residues 185–186 (YR) and Asn205. Residue Ser213 is modified to Phosphoserine.

It belongs to the protein kinase superfamily. Ser/Thr protein kinase family. As to quaternary structure, interacts with ASK7/BIN2, BSK1, BSK5, BSK6 and BSK11. Interacts with BSL2. In terms of processing, phosphorylated by BRI1, ASK7/BIN2 and ASK9/BIL2.

It localises to the cell membrane. The catalysed reaction is L-seryl-[protein] + ATP = O-phospho-L-seryl-[protein] + ADP + H(+). The enzyme catalyses L-threonyl-[protein] + ATP = O-phospho-L-threonyl-[protein] + ADP + H(+). Functionally, probable serine/threonine kinase that acts as a positive regulator of brassinosteroid (BR) signaling downstream of the receptor kinase BRI1. Functions redundantly with BSK3, BSK4, BSK6 and BSK7. Involved in the regulation of sucrose-phosphate synthase 1 (SPS1) in the context of sucrose resuply after starvation. Activates BSL2, a phosphatase that may dephosphorylate SPS1, leading to the activation of SPS1. The sequence is that of Serine/threonine-protein kinase BSK8 from Arabidopsis thaliana (Mouse-ear cress).